The chain runs to 460 residues: Nucleosome assembly protein 1-like 2 (460 aa).

Basic and acidic residues-rich tracts occupy residues 1-11 (MAESENRKELS) and 27-36 (LGEHLERGED). Disordered stretches follow at residues 1 to 88 (MAES…ADRP) and 214 to 238 (EEEEEEEEDDIEATGEENKEEEDPK). Residues 214 to 236 (EEEEEEEEDDIEATGEENKEEED) are compositionally biased toward acidic residues. A Nuclear localization signal motif is present at residues 346–352 (IKKKQKH).

The protein belongs to the nucleosome assembly protein (NAP) family.

It is found in the nucleus. Functionally, acidic protein which may be involved in interactions with other proteins or DNA. The chain is Nucleosome assembly protein 1-like 2 (NAP1L2) from Homo sapiens (Human).